The chain runs to 263 residues: LOB domain-containing protein 41 (263 aa).

An LOB domain is found at 3-109; that stretch reads MSCNGCRVLR…VEAVMKGEPV (107 aa). A disordered region spans residues 162 to 204; that stretch reads TVAIQAESEGKSDEASHDSSLSHQSEIVAAHEGESKESESNVS. Basic and acidic residues-rich tracts occupy residues 169–178 and 190–200; these read SEGKSDEASH and AAHEGESKESE.

It belongs to the LOB domain-containing protein family. As to expression, expressed in young shoots, roots, stems, leaves and flowers.

This Arabidopsis thaliana (Mouse-ear cress) protein is LOB domain-containing protein 41 (LBD41).